Consider the following 90-residue polypeptide: Molybdopterin synthase sulfur carrier subunit (90 aa).

A 1-thioglycine; alternate modification is found at glycine 90. Residue glycine 90 is modified to Glycyl adenylate; alternate.

Belongs to the MoaD family. MOCS2A subfamily. As to quaternary structure, heterotetramer; composed of 2 small (Mocs2A) and 2 large (Mocs2B) subunits. Post-translationally, C-terminal thiocarboxylation occurs in 2 steps, it is first acyl-adenylated (-COAMP) via the hesA/moeB/thiF part of MOCS3, then thiocarboxylated (-COSH) via the rhodanese domain of MOCS3.

The protein resides in the cytoplasm. The protein operates within cofactor biosynthesis; molybdopterin biosynthesis. In terms of biological role, acts as a sulfur carrier required for molybdopterin biosynthesis. Component of the molybdopterin synthase complex that catalyzes the conversion of precursor Z into molybdopterin by mediating the incorporation of 2 sulfur atoms into precursor Z to generate a dithiolene group. In the complex, serves as sulfur donor by being thiocarboxylated (-COSH) at its C-terminus by MOCS3. After interaction with Mocs2B, the sulfur is then transferred to precursor Z to form molybdopterin. Involved during biosynthesis of the molybdenum cofactor. This is Molybdopterin synthase sulfur carrier subunit from Drosophila melanogaster (Fruit fly).